Consider the following 753-residue polypeptide: Rho guanine nucleotide exchange factor gef1 (753 aa).

Disordered regions lie at residues Ser-52–Arg-150, Thr-175–Gly-194, and Ala-200–Leu-245. 4 stretches are compositionally biased toward polar residues: residues Asp-94–Ser-105, Gly-114–Pro-141, Thr-181–Arg-191, and Ala-200–Thr-220. The segment covering Thr-230 to Leu-245 has biased composition (low complexity). In terms of domain architecture, DH spans Lys-311–Lys-507.

As to quaternary structure, interacts with cdc42.

The protein localises to the cytoplasm. Its function is as follows. Has a role in the control of cell polarity and cytokinesis. Involved in bipolar growth, via modulation of cdc42-shk1-orb6 signaling, and septum formation. Stimulates guanine nucleotide exchange of cdc42. This Schizosaccharomyces pombe (strain 972 / ATCC 24843) (Fission yeast) protein is Rho guanine nucleotide exchange factor gef1 (gef1).